Here is a 213-residue protein sequence, read N- to C-terminus: Endoplasmic reticulum vesicle protein 25 (213 aa).

The N-terminal stretch at 1–20 (MILRIPSLLYLFTLLTAVYA) is a signal peptide. At 21–181 (VKFDLTSDRN…TNESTNQRVK (161 aa)) the chain is on the lumenal side. The GOLD domain maps to 33-122 (PSIIWNFASA…VRSVELDVDI (90 aa)). Residues 182 to 202 (VFSVLIICCTIGLGVWQLLHL) form a helical membrane-spanning segment. Topologically, residues 203–213 (RSFFKRKYLID) are cytoplasmic.

Belongs to the EMP24/GP25L family.

The protein localises to the endoplasmic reticulum membrane. It is found in the golgi apparatus membrane. Its function is as follows. Constituent of COPII-coated endoplasmic reticulum-derived transport vesicles. Required for efficient transport of a subset of secretory proteins to the Golgi. Facilitates retrograde transport from the Golgi to the endoplasmic reticulum. This chain is Endoplasmic reticulum vesicle protein 25 (ERV25), found in Cryptococcus neoformans var. neoformans serotype D (strain B-3501A) (Filobasidiella neoformans).